The sequence spans 98 residues: Aspartyl/glutamyl-tRNA(Asn/Gln) amidotransferase subunit C (98 aa).

The protein belongs to the GatC family. In terms of assembly, heterotrimer of A, B and C subunits.

It catalyses the reaction L-glutamyl-tRNA(Gln) + L-glutamine + ATP + H2O = L-glutaminyl-tRNA(Gln) + L-glutamate + ADP + phosphate + H(+). It carries out the reaction L-aspartyl-tRNA(Asn) + L-glutamine + ATP + H2O = L-asparaginyl-tRNA(Asn) + L-glutamate + ADP + phosphate + 2 H(+). In terms of biological role, allows the formation of correctly charged Asn-tRNA(Asn) or Gln-tRNA(Gln) through the transamidation of misacylated Asp-tRNA(Asn) or Glu-tRNA(Gln) in organisms which lack either or both of asparaginyl-tRNA or glutaminyl-tRNA synthetases. The reaction takes place in the presence of glutamine and ATP through an activated phospho-Asp-tRNA(Asn) or phospho-Glu-tRNA(Gln). This chain is Aspartyl/glutamyl-tRNA(Asn/Gln) amidotransferase subunit C, found in Arthrobacter sp. (strain FB24).